The primary structure comprises 630 residues: MGILDKVSSPADLKGLDADQLEQLAAEIREFLIQKVSATGGHLGPNLGVVELTIAMHRVFDSPSDPLIFDTGHQSYVHKILTGRRDLFDTLRQKDGLSGYPDRAESPHDWTESSHASASLSYADGLAKAFELTGQVHRHVVALVGDGALTGGMTWEALNNIAAAKNRSLVVVVNDNGRSYSPTIGGLAENLAALRLQPMYDRVMDTGKNALGRMGWVGDRAFQVIHGLKEGVKHTVIPHEMFPELGLKYIGPVDGHDLKQVENALRYAKDYGGPVIVHTVTQKGKGFDPAEQDEADQMHSTGVIDPITGESMAKKTEGAISWTKVFSNHLIDIANDREDIVAITAAMAGPTGLADFAKVHPSRTYDVGIAEQHAVTSAAGLALGGLHPVVAVYSTFLNRAFDQLLMDVALLKLGVTLVLDRAGITGSDGASHNGMWDLSITGIVPGIHVAAPRDARTLELALDRAVAVDDAPTVVRFPKGDAPAGIPAVREEDDYDVLFEQSGDKSEGRVLIVSFGALSKQALGAAQALCDANFSATVVDPHWVVPTADSLLEFARGFDLIVTIEDNGVHGGAGSRLHYDLSQAGIDVPVRNLGVPQEFLAHGSRGEVLEDLGLDAETVARTVVGYAEKL.

Residues histidine 73 and serine 114–alanine 116 each bind thiamine diphosphate. Mg(2+) is bound at residue aspartate 146. Thiamine diphosphate-binding positions include glycine 147–alanine 148, asparagine 176, phenylalanine 287, and glutamate 371. Asparagine 176 is a Mg(2+) binding site.

The protein belongs to the transketolase family. DXPS subfamily. In terms of assembly, homodimer. Mg(2+) is required as a cofactor. Thiamine diphosphate serves as cofactor.

It catalyses the reaction D-glyceraldehyde 3-phosphate + pyruvate + H(+) = 1-deoxy-D-xylulose 5-phosphate + CO2. The protein operates within metabolic intermediate biosynthesis; 1-deoxy-D-xylulose 5-phosphate biosynthesis; 1-deoxy-D-xylulose 5-phosphate from D-glyceraldehyde 3-phosphate and pyruvate: step 1/1. Its function is as follows. Catalyzes the acyloin condensation reaction between C atoms 2 and 3 of pyruvate and glyceraldehyde 3-phosphate to yield 1-deoxy-D-xylulose-5-phosphate (DXP). The sequence is that of 1-deoxy-D-xylulose-5-phosphate synthase from Corynebacterium jeikeium (strain K411).